The primary structure comprises 505 residues: Glycerol kinase (505 aa).

Thr14 is a binding site for ADP. ATP is bound by residues Thr14, Thr15, and Ser16. Thr14 contacts sn-glycerol 3-phosphate. Residue Arg18 participates in ADP binding. Sn-glycerol 3-phosphate is bound by residues Arg84, Glu85, Tyr136, and Asp246. Residues Arg84, Glu85, Tyr136, Asp246, and Gln247 each coordinate glycerol. ADP is bound by residues Thr268 and Gly311. Positions 268, 311, 315, and 412 each coordinate ATP. Positions 412 and 416 each coordinate ADP.

Belongs to the FGGY kinase family.

It catalyses the reaction glycerol + ATP = sn-glycerol 3-phosphate + ADP + H(+). Its pathway is polyol metabolism; glycerol degradation via glycerol kinase pathway; sn-glycerol 3-phosphate from glycerol: step 1/1. Its activity is regulated as follows. Inhibited by fructose 1,6-bisphosphate (FBP). Key enzyme in the regulation of glycerol uptake and metabolism. Catalyzes the phosphorylation of glycerol to yield sn-glycerol 3-phosphate. This Vibrio cholerae serotype O1 (strain ATCC 39315 / El Tor Inaba N16961) protein is Glycerol kinase.